The primary structure comprises 590 residues: Cell division protein FtsZ 1 (590 aa).

GTP contacts are provided by residues 24–28 (GGGGN), 111–113 (GTG), Glu-142, Arg-146, and Asp-190. 2 disordered regions span residues 346-372 (AAVPAQPQPTVSLQPVPQPQPVQQPLQ) and 524-590 (EATN…RQSS). Residues 534-546 (AAAPSAASQQRRP) show a composition bias toward low complexity. Residues 559-576 (GQLDDHGRAAPQMRSHED) are compositionally biased toward basic and acidic residues.

The protein belongs to the FtsZ family. As to quaternary structure, homodimer. Polymerizes to form a dynamic ring structure in a strictly GTP-dependent manner. Interacts directly with several other division proteins.

Its subcellular location is the cytoplasm. Functionally, essential cell division protein that forms a contractile ring structure (Z ring) at the future cell division site. The regulation of the ring assembly controls the timing and the location of cell division. One of the functions of the FtsZ ring is to recruit other cell division proteins to the septum to produce a new cell wall between the dividing cells. Binds GTP and shows GTPase activity. In Rhizobium meliloti (strain 1021) (Ensifer meliloti), this protein is Cell division protein FtsZ 1.